Here is a 502-residue protein sequence, read N- to C-terminus: Cytochrome P450 monooxygenase prhN (502 aa).

Residues 14 to 30 (SGALLIVGILLLRWALW) form a helical membrane-spanning segment. N-linked (GlcNAc...) asparagine glycosylation is present at Asn-165. Cys-443 is a binding site for heme. A glycan (N-linked (GlcNAc...) asparagine) is linked at Asn-474.

The protein belongs to the cytochrome P450 family. The cofactor is heme.

The protein resides in the membrane. It participates in secondary metabolite biosynthesis; terpenoid biosynthesis. In terms of biological role, cytochrome P450 monooxygenase; part of the gene cluster that mediates the biosynthesis of paraherquonin, a meroterpenoid with a unique, highly congested hexacyclic molecular architecture. The first step of the pathway is the synthesis of 3,5-dimethylorsellinic acid (DMOA) by the polyketide synthase prhL. Synthesis of DMOA is followed by farnesylation by the prenyltransferase prhE, methylesterification by the methyl-transferase prhM, epoxidation of the prenyl chain by the flavin-dependent monooxygenase prhF, and cyclization of the farnesyl moiety by the terpene cyclase prhH, to yield the tetracyclic intermediate, protoaustinoid A. The short chain dehydrogenase prhI then oxidizes the C-3 alcohol group of the terpene cyclase product to transform protoaustinoid A into protoaustinoid B. The FAD-binding monooxygenase prhJ catalyzes the oxidation of protoaustinoid B into preaustinoid A which is further oxidized into preaustinoid A1 by FAD-binding monooxygenase phrK. Finally, prhA leads to berkeleydione via the berkeleyone B intermediate. PrhA is a multifunctional dioxygenase that first desaturates at C5-C6 to form berkeleyone B, followed by rearrangement of the A/B-ring to form the cycloheptadiene moiety in berkeleydione. Berkeleydione serves as the key intermediate for the biosynthesis of paraherquonin as well as many other meroterpenoids. The cytochrome P450 monooxygenases prhB, prhD, and prhN, as well as the isomerase prhC, are probably involved in the late stage of paraherquonin biosynthesis, after the production of berkeleydione. Especially prhC might be a multifunctional enzyme that catalyzes the D-ring expansion via intramolecular methoxy rearrangement, as well as the hydrolysis of the expanded D-ring. The polypeptide is Cytochrome P450 monooxygenase prhN (Penicillium brasilianum).